The following is a 203-amino-acid chain: Urease accessory protein UreG (203 aa).

Position 11 to 18 (glycine 11 to threonine 18) interacts with GTP.

Belongs to the SIMIBI class G3E GTPase family. UreG subfamily. Homodimer. UreD, UreF and UreG form a complex that acts as a GTP-hydrolysis-dependent molecular chaperone, activating the urease apoprotein by helping to assemble the nickel containing metallocenter of UreC. The UreE protein probably delivers the nickel.

It is found in the cytoplasm. Functionally, facilitates the functional incorporation of the urease nickel metallocenter. This process requires GTP hydrolysis, probably effectuated by UreG. The sequence is that of Urease accessory protein UreG from Prochlorococcus marinus (strain MIT 9215).